We begin with the raw amino-acid sequence, 188 residues long: Zinc finger protein 428 (188 aa).

The segment at 1 to 162 (MTETREPAET…EEEEEEGTYH (162 aa)) is disordered. Residues 40 to 61 (PDSEEEEDEEEEEEETTDDPEY) show a composition bias toward acidic residues. The span at 84–94 (RAAQPPAQPCQ) shows a compositional bias: low complexity. A Phosphothreonine modification is found at T108. A compositionally biased stretch (low complexity) spans 116 to 129 (PATAPQEAPAPEGR). Residues 138 to 149 (PPRAGEGRPAGR) are compositionally biased toward basic and acidic residues. The segment at 161 to 183 (YHCTECEDSFDNLGELHGHFMLH) adopts a C2H2-type zinc-finger fold.

This is Zinc finger protein 428 (ZNF428) from Homo sapiens (Human).